Consider the following 120-residue polypeptide: Large ribosomal subunit protein uL18 (120 aa).

The segment covering 1–10 (MKLTRRESKE) has biased composition (basic and acidic residues). Residues 1–26 (MKLTRRESKERRHRRVRGKVQGSPER) form a disordered region.

Belongs to the universal ribosomal protein uL18 family. Part of the 50S ribosomal subunit; part of the 5S rRNA/L5/L18/L25 subcomplex. Contacts the 5S and 23S rRNAs.

Functionally, this is one of the proteins that bind and probably mediate the attachment of the 5S RNA into the large ribosomal subunit, where it forms part of the central protuberance. This chain is Large ribosomal subunit protein uL18, found in Nostoc sp. (strain PCC 7120 / SAG 25.82 / UTEX 2576).